A 60-amino-acid chain; its full sequence is Large ribosomal subunit protein bL32 (60 aa).

It belongs to the bacterial ribosomal protein bL32 family.

This chain is Large ribosomal subunit protein bL32 (rpmF), found in Borreliella burgdorferi (strain ATCC 35210 / DSM 4680 / CIP 102532 / B31) (Borrelia burgdorferi).